The chain runs to 79 residues: RNA-binding protein Hfq (79 aa).

In terms of domain architecture, Sm spans 9–69 (DTFLNHLRKE…ISTFTPQRPV (61 aa)).

Belongs to the Hfq family. As to quaternary structure, homohexamer.

Its function is as follows. RNA chaperone that binds small regulatory RNA (sRNAs) and mRNAs to facilitate mRNA translational regulation in response to envelope stress, environmental stress and changes in metabolite concentrations. Also binds with high specificity to tRNAs. The protein is RNA-binding protein Hfq of Brevibacillus brevis (strain 47 / JCM 6285 / NBRC 100599).